The chain runs to 669 residues: DNA ligase (669 aa).

Residue Asp35–Asp39 coordinates NAD(+). Residues Tyr52–Glu71 form a disordered region. Residues Pro61–Glu71 are compositionally biased toward basic and acidic residues. Residues Ser84–Leu85 and Glu115 each bind NAD(+). Lys117 acts as the N6-AMP-lysine intermediate in catalysis. NAD(+) is bound by residues Arg138, Glu175, Lys290, and Lys314. The Zn(2+) site is built by Cys408, Cys411, Cys426, and Cys432. The BRCT domain maps to Pro590–Glu669.

The protein belongs to the NAD-dependent DNA ligase family. LigA subfamily. Mg(2+) serves as cofactor. Mn(2+) is required as a cofactor.

The catalysed reaction is NAD(+) + (deoxyribonucleotide)n-3'-hydroxyl + 5'-phospho-(deoxyribonucleotide)m = (deoxyribonucleotide)n+m + AMP + beta-nicotinamide D-nucleotide.. In terms of biological role, DNA ligase that catalyzes the formation of phosphodiester linkages between 5'-phosphoryl and 3'-hydroxyl groups in double-stranded DNA using NAD as a coenzyme and as the energy source for the reaction. It is essential for DNA replication and repair of damaged DNA. In Porphyromonas gingivalis (strain ATCC 33277 / DSM 20709 / CIP 103683 / JCM 12257 / NCTC 11834 / 2561), this protein is DNA ligase.